Consider the following 156-residue polypeptide: Small ribosomal subunit protein uS7 (156 aa).

The protein belongs to the universal ribosomal protein uS7 family. As to quaternary structure, part of the 30S ribosomal subunit. Contacts proteins S9 and S11.

Functionally, one of the primary rRNA binding proteins, it binds directly to 16S rRNA where it nucleates assembly of the head domain of the 30S subunit. Is located at the subunit interface close to the decoding center, probably blocks exit of the E-site tRNA. This is Small ribosomal subunit protein uS7 from Mycoplasma mobile (strain ATCC 43663 / 163K / NCTC 11711) (Mesomycoplasma mobile).